Here is a 621-residue protein sequence, read N- to C-terminus: ATP-dependent DNA helicase Q1 (621 aa).

The Helicase ATP-binding domain maps to 100-275; the sequence is VNATMARKDI…QKILCVEKCL (176 aa). 113-120 contributes to the ATP binding site; that stretch reads MPTGGGKS. The short motif at 219 to 222 is the DEVH box element; it reads DEVH. The Helicase C-terminal domain occupies 296–451; the sequence is SAEDFIENIA…EMVSYCQNIS (156 aa). Residues C453, C471, C475, and C478 each coordinate Zn(2+). N6-acetyllysine is present on residues K514 and K522. 2 positions are modified to phosphoserine: S597 and S602.

The protein belongs to the helicase family. RecQ subfamily. As to quaternary structure, may form homodimers or higher order oligomers. Interacts with EXO1. Interacts with MLH1. Interacts with PARP1. Requires Mg(2+) as cofactor. Mn(2+) serves as cofactor. The cofactor is Zn(2+).

Its subcellular location is the nucleus. It carries out the reaction Couples ATP hydrolysis with the unwinding of duplex DNA by translocating in the 3'-5' direction.. The catalysed reaction is ATP + H2O = ADP + phosphate + H(+). The enzyme catalyses dATP + H2O = dADP + phosphate + H(+). Its function is as follows. DNA helicase that plays a role in DNA damage repair and genome stability. Exhibits a magnesium- and ATP-dependent DNA-helicase activity that unwinds single- and double-stranded DNA in a 3'-5' direction. Plays a role in restoring regressed replication forks. Required to restart stalled replication forks induced by abortive topoisomerase 1 and 2 lesions. May play a role in the repair of DNA that is damaged by ultraviolet light or other mutagens. This chain is ATP-dependent DNA helicase Q1 (Recql), found in Rattus norvegicus (Rat).